The chain runs to 916 residues: DNA topoisomerase 1 alpha (916 aa).

The tract at residues 1–369 (MGTETVSKPV…SSPSSGDGQK (369 aa)) is disordered. Positions 34 to 47 (SNSNQSKSNSQRSK) are enriched in low complexity. Polar residues predominate over residues 60–76 (PVTSPNGTTPSNKTSIV). Over residues 77–93 (KSSMPSSSSKASPAKSP) the composition is skewed to low complexity. Residues 102–119 (VKDRSQLQKDQSECKIEH) are compositionally biased toward basic and acidic residues. The span at 130–148 (SILSGNKGPTSSRQVSSPQ) shows a compositional bias: polar residues. The span at 149–168 (PEKKNNGDRPLDRASRIIKD) shows a compositional bias: basic and acidic residues. At Ser170 the chain carries Phosphoserine. Polar residues predominate over residues 230-239 (KNSSADQSSL). Positions 253–267 (MKQDSVKKEIDDKGR) are enriched in basic and acidic residues. The span at 285–294 (GTDDDDDDDV) shows a compositional bias: acidic residues. Thr286 is subject to Phosphothreonine. Positions 354–366 (YSTSSKSSPSSGD) are enriched in low complexity. 3 interaction with DNA regions span residues 577–578 (KY), 640–645 (RAGNEK), and 731–733 (TAK). Residues 584 to 914 (GSSLKGLSDK…MDVEPEYRFS (331 aa)) form the Topo IB-type catalytic domain. Positions 778 to 860 (QRTVSKTHGA…ERDMHTKEDL (83 aa)) form a coiled coil. The active-site O-(3'-phospho-DNA)-tyrosine intermediate is the Tyr872.

It belongs to the type IB topoisomerase family. As to quaternary structure, interacts with DEK3. As to expression, expressed in inflorescence meristems. Expressed in primordia of sepals, petals, stamens, carpels and ovules. Expressed in midstage embryos.

It localises to the nucleus. It catalyses the reaction ATP-independent breakage of single-stranded DNA, followed by passage and rejoining.. In terms of biological role, releases the supercoiling and torsional tension of DNA introduced during the DNA replication and transcription by transiently cleaving and rejoining one strand of the DNA duplex. Introduces a single-strand break via transesterification at a target site in duplex DNA. The scissile phosphodiester is attacked by the catalytic tyrosine of the enzyme, resulting in the formation of a DNA-(3'-phosphotyrosyl)-enzyme intermediate and the expulsion of a 5'-OH DNA strand. The free DNA strand then rotates around the intact phosphodiester bond on the opposing strand, thus removing DNA supercoils. Finally, in the religation step, the DNA 5'-OH attacks the covalent intermediate to expel the active-site tyrosine and restore the DNA phosphodiester backbone. Can complement a TOP1-deficient yeast mutant. Plays a critical role in the maintenance of a regular pattern of organ initiation. Topoisomerases I enzymes (TOP1A and TOP1B) are essential for plant survival. Functions together with the stem cell maintenance gene WUSCHEL (WUS) in stem cell regulation. Required to maintain developmentally regulated gene repression. Functions synergistically with chromatin remodeling factors. Is required for the repression of WUS expression in flower development. Plays a role in polycomb group (PcG) protein-mediated histone H3 trimethylation on 'Lys-27' (H3K27me3) at the WUS gene locus. H3K27me3 induces transcriptional repression of WUS. May assist AGAMOUS (AG) in recruiting PcG proteins to WUS locus. Reduces nucleosome density, especially at genes that are targets of PcG proteins. Plays a role in epigenetic silencing. Involved in RNA-directed DNA methylation (RdDM) by promoting Pol V transcription to generate long non-coding RNA transcripts. Is dispensable for Pol IV-mediated small interfering RNA (siRNA) biogenesis. Promotes transposable element (TE) silencing at endogenous RdDM target loci through histone H3 dimethylation of 'Lys-9' (H3K9me2). Promotes the production of Pol V-dependent long non-coding transcripts that facilitate the recruitment of siRNA-AGO4 and AGO4 occupancy at TEs. This chain is DNA topoisomerase 1 alpha, found in Arabidopsis thaliana (Mouse-ear cress).